A 178-amino-acid chain; its full sequence is ATP synthase subunit delta (178 aa).

The protein belongs to the ATPase delta chain family. F-type ATPases have 2 components, F(1) - the catalytic core - and F(0) - the membrane proton channel. F(1) has five subunits: alpha(3), beta(3), gamma(1), delta(1), epsilon(1). F(0) has three main subunits: a(1), b(2) and c(10-14). The alpha and beta chains form an alternating ring which encloses part of the gamma chain. F(1) is attached to F(0) by a central stalk formed by the gamma and epsilon chains, while a peripheral stalk is formed by the delta and b chains.

The protein resides in the cell inner membrane. Functionally, f(1)F(0) ATP synthase produces ATP from ADP in the presence of a proton or sodium gradient. F-type ATPases consist of two structural domains, F(1) containing the extramembraneous catalytic core and F(0) containing the membrane proton channel, linked together by a central stalk and a peripheral stalk. During catalysis, ATP synthesis in the catalytic domain of F(1) is coupled via a rotary mechanism of the central stalk subunits to proton translocation. In terms of biological role, this protein is part of the stalk that links CF(0) to CF(1). It either transmits conformational changes from CF(0) to CF(1) or is implicated in proton conduction. The protein is ATP synthase subunit delta of Pseudomonas fluorescens (strain ATCC BAA-477 / NRRL B-23932 / Pf-5).